A 267-amino-acid polypeptide reads, in one-letter code: tRNA pseudouridine synthase A (267 aa).

Residue D54 is the Nucleophile of the active site. Substrate is bound at residue Y114.

It belongs to the tRNA pseudouridine synthase TruA family. As to quaternary structure, homodimer.

It catalyses the reaction uridine(38/39/40) in tRNA = pseudouridine(38/39/40) in tRNA. Its function is as follows. Formation of pseudouridine at positions 38, 39 and 40 in the anticodon stem and loop of transfer RNAs. This chain is tRNA pseudouridine synthase A, found in Tropheryma whipplei (strain TW08/27) (Whipple's bacillus).